The primary structure comprises 336 residues: Ferredoxin--NADP reductase 1 (336 aa).

The FAD site is built by glutamate 37, lysine 45, phenylalanine 50, valine 90, leucine 125, aspartate 287, and threonine 328.

Belongs to the ferredoxin--NADP reductase type 2 family. In terms of assembly, homodimer. The cofactor is FAD.

It catalyses the reaction 2 reduced [2Fe-2S]-[ferredoxin] + NADP(+) + H(+) = 2 oxidized [2Fe-2S]-[ferredoxin] + NADPH. The chain is Ferredoxin--NADP reductase 1 from Bacillus velezensis (strain DSM 23117 / BGSC 10A6 / LMG 26770 / FZB42) (Bacillus amyloliquefaciens subsp. plantarum).